Consider the following 5376-residue polypeptide: Zonadhesin (5376 aa).

The N-terminal stretch at 1 to 17 (MALPVWTLMLLVGAAWG) is a signal peptide. The Extracellular portion of the chain corresponds to 18–5310 (QEQVPAWRPN…TTRKKIEASS (5293 aa)). MAM domains are found at residues 45–210 (SKCD…TCNQ), 215–374 (QMCT…PCGE), and 377–542 (PQCD…PCRV). N-linked (GlcNAc...) asparagine glycosylation is found at asparagine 339 and asparagine 499. An 80 X heptapeptide repeats (approximate) (mucin-like domain) region spans residues 547–1170 (EIPSSPLLPP…PTTGVSTTES (624 aa)). 2 disordered regions span residues 553-579 (LLPP…TKAT) and 1037-1113 (TVPP…TVST). Residues 1052–1113 (TEVTTTPPEE…IASEETTVST (62 aa)) show a composition bias toward low complexity. A TIL 1 domain is found at 1171 to 1220 (CPPNAHIELCACPASCESPKPSCQPPCIPGCVCNPGFLFSNNQCINESSC). Residues asparagine 1216, asparagine 1239, and asparagine 1314 are each glycosylated (N-linked (GlcNAc...) asparagine). Positions 1227 to 1275 (KHYKPGEEWFTPNCTERCRCLPGSLMECQISQCGTHTVCQLKSDQYQCE) constitute a VWFC 1 domain. The VWFD 1 domain maps to 1280–1462 (ATCLVYGDLH…DKDWVSSRCQ (183 aa)). Cystine bridges form between cysteine 1282–cysteine 1417 and cysteine 1304–cysteine 1461. One can recognise a TIL 2 domain in the interval 1555 to 1608 (CPKNSRYSLCAKPCPETCHPISTTQHCSDKCVEGCECDPGFILSGSECVPSSQC). The VWFC 2 domain occupies 1609-1664 (GCTSFQGRYFKLQEQWFNPDCKEICTCESHNHILCKPWKCKAQEACSYKNGVLGCH). The 181-residue stretch at 1669-1849 (ATCMVSGDPH…ILEASDPGCF (181 aa)) folds into the VWFD 2 domain. 2 cysteine pairs are disulfide-bonded: cysteine 1671/cysteine 1809 and cysteine 1693/cysteine 1848. Asparagine 1814, asparagine 1908, and asparagine 1933 each carry an N-linked (GlcNAc...) asparagine glycan. Positions 1941 to 1995 (CPPRSSYNPCANSCPATCLTLSTPRDCPTLPCVEGCECQSGHILSGTTCVPLRQC) constitute a TIL 3 domain. Positions 1996 to 2052 (GCSDQDGSYHLLGESWYTEKTCTTLCTCSAHSNITCSPTACKANHVCLRQEGLLRCA) constitute a VWFC 3 domain. 4 N-linked (GlcNAc...) asparagine glycosylation sites follow: asparagine 2028, asparagine 2111, asparagine 2142, and asparagine 2332. One can recognise a VWFD 3 domain in the interval 2056-2239 (GECRISEDSQ…KDKSMDPNCQ (184 aa)). Disulfide bonds link cysteine 2058–cysteine 2200 and cysteine 2080–cysteine 2238. Residues 2340-2398 (CPAHSHYTNCLPSCPPSCLDPDSRCEGSGHKVPATCREGCICQPDYVLLNDKCVLRSHC) enclose the TIL 4 domain. Residues 2399–2454 (GCKDAQGVFIPAGKTWISEDCTQSCTCMKGSMRCWDFQCPPGTYCKNSNDGSSNCV) form the VWFC 4 domain. A TIL 5 domain is found at 2460–2518 (CPAHSKFTDCLPPCHPSCSDPDGHCEGISTNAHSNCKEGCVCQPGYVLRNDKCVLRIEC). The 56-residue stretch at 2519–2574 (GCQHTQGGFIPAGKNWTSRGCSQSCDCMEGVIRCQNFQCPSGTYCQDIEDGTSNCA) folds into the VWFC 5 domain. 2 N-linked (GlcNAc...) asparagine glycosylation sites follow: asparagine 2533 and asparagine 2575. Residues 2580–2638 (CPAHSSFTNCLPPCQPSCSDPEGHCGGSTTKAPSACQEGCVCEPDYVVLNNKCVPRIEC) form the TIL 6 domain. Positions 2639 to 2694 (GCKDAQGVLIPADKIWINKGCTQTCACVTGTIHCRDFQCPSGTYCKDIKDDASNCT) constitute a VWFC 6 domain. Asparagine 2692 is a glycosylation site (N-linked (GlcNAc...) asparagine). Positions 2700-2758 (CPDHSLYTHCLPSCLLSCSDPDGLCRGTSPEAPSTCKEGCVCDPDYVLSNDKCVLRIEC) constitute a TIL 7 domain. The region spanning 2759–2814 (GCKDAQGVLIPAGKTWINRGCTQSCSCMGGAIQCQNFKCPSEAYCQDMEDGNSNCT) is the VWFC 7 domain. Residue asparagine 2812 is glycosylated (N-linked (GlcNAc...) asparagine). One can recognise a TIL 8 domain in the interval 2820–2878 (CPAHSHYTNCLPTCQPSCSDPDGHCEGSSTKAPSACKEGCVCEPDYVMLNNKCVPRIEC). The VWFC 8 domain maps to 2879 to 2934 (GCKDTQGVLIPADKTWINRGCTQSCTCRGGAIQCQKYHCSSGTYCKDMEDDSSSCA). Positions 2940-2998 (CPAHSHFTNCLPPCQPSCLDSEGHCEGSTTKAPSACQEGCVCEPDYVVLNNKCVPRIEC) constitute a TIL 9 domain. The 56-residue stretch at 2999–3054 (GCKDAQGVLIPADKTWINRGCTQSCTCKGGAIQCQKFQCPSETYCKDIEDGNSNCT) folds into the VWFC 9 domain. 4 N-linked (GlcNAc...) asparagine glycosylation sites follow: asparagine 3052, asparagine 3065, asparagine 3144, and asparagine 3172. The 59-residue stretch at 3060-3118 (CPANSNFTSCLPSCQPSCSNTDVHCEGSSPNTLSSCREGCVCQSGYVLHNDKCILRNQC) folds into the TIL 10 domain. A VWFC 10 domain is found at 3119–3174 (GCKDAQGALIPEGKTWITSGCTQSCNCTGGAIQCQNFQCPLKTYCKDLKDGSSNCT). The TIL 11 domain occupies 3180-3238 (CPAHSRYTNCLPSCPPLCLDPEGLCEGTSPKVPSTCREGCICQPGYLMHKNKCVLRIFC). A VWFC 11 domain is found at 3239–3294 (GCKNTQGAFISADKTWISRGCTQSCTCPAGAIHCRNFKCPSGTYCKNGDNGSSNCT). 2 N-linked (GlcNAc...) asparagine glycosylation sites follow: asparagine 3288 and asparagine 3292. Positions 3300-3355 (CPTNSQFTDCLPSCVPSCSNRCEVTSPSVPSSCREGCLCNHGFVFSEDKCVPRTQC) constitute a TIL 12 domain. The VWFC 12 domain occupies 3356-3411 (GCKDARGAIIPAGKTWTSKGCTQSCACVEGNIQCQNFQCPPETYCKDNSEGSSTCT). A TIL 13 domain is found at 3417–3475 (CPAHTQYTSCLPSCLPSCLDPEGLCKDISPKVPSTCKEGCVCQSGYVLNSDKCVLRAEC). Residues 3476–3531 (DCKDAQGALIPAGKTWTSPGCTQSCACMGGAVQCQSSQCPPGTYCKDNEDGNSNCA) enclose the VWFC 13 domain. The TIL 14 domain occupies 3537 to 3595 (CPAHSLFTNCLPPCLPSCLDPDGLCKGASPKVPSTCKEGCICQSGYVLSNNKCLLRNRC). The region spanning 3596–3651 (GCKDAHGALIPEDKTWVSRGCTQSCVCTGGSIQCLSSQCPPGAYCKDNEDGSSNCA) is the VWFC 14 domain. One can recognise a TIL 15 domain in the interval 3657–3715 (CPANSHYTDCFPPCPPSCSDPEGHCEASGPRVLSTCREGCLCNPGFVLDRDKCVPRVEC). Residues 3716–3771 (GCKDAQGALIPSGKTWTSPGCTQSCACMGGVVQCQSSQCPPGTYCKDNEDGNSNCA) form the VWFC 15 domain. The 59-residue stretch at 3777–3835 (CPTHSNYTDCLPFCLPSCLDPSALCGGTSPKGPSTCKEGCVCQPGYVLDKDKCILKIEC) folds into the TIL 16 domain. Asparagine 3782 carries N-linked (GlcNAc...) asparagine glycosylation. Positions 3836–3891 (GCRDTQGAVIPAGKTWLSTGCIQSCACVEGTIQCQNFQCPPGTYCNHNNNCAKIPL) constitute a VWFC 16 domain. A TIL 17 domain is found at 3893–3951 (CPAHSHFTSCLPSCPPSCANLDGSCEQTSPKVPSTCKEGCLCQPGYFLNNGKCVLQTHC). Residues 3952–4007 (DCKDAEGGLVPAGKTWTSKDCTQSCACTGGAVQCQNFQCPLGTYCKDSGDGSSNCT) form the VWFC 17 domain. Asparagine 4005 is a glycosylation site (N-linked (GlcNAc...) asparagine). Residues 4029 to 4087 (CPAHSHFTSCLPSCPPSCSNLDGSCVESNFKAPSVCKKGCICQPGYLLNNDKCVLRIQC) form the TIL 18 domain. One can recognise a VWFC 18 domain in the interval 4088 to 4143 (GCKDTQGGLIPAGRTWISSDCTKSCSCMGGIIQCRDFQCPPGTYCKESNDSSRTCA). N-linked (GlcNAc...) asparagine glycosylation is present at asparagine 4136. Residues 4149–4207 (CPAHSHYTNCLPACSRSCTDLDGHCEGTSPKVPSPCKEGCLCQPGYVVHNHKCVLQIHC) enclose the TIL 19 domain. In terms of domain architecture, VWFC 19 spans 4208 to 4262 (GCKDAQGGFVPAGKTWISRGCTQSCACVGGAVQCHNFTCPTGTQCQNSSCSKITV). 2 N-linked (GlcNAc...) asparagine glycosylation sites follow: asparagine 4243 and asparagine 4254. The TIL 20 domain occupies 4264–4322 (CPAHSQYTTCLPSCLPSCFDPEGLCGGASPRAPSTCREGCVCEADYVLREDKCVLRTQC). The VWFC 20 domain maps to 4323–4378 (GCKDAQGDLIPANKTWLTRGCAQKCTCKGGNIHCWNFKCPLGTECKDSVDGGSNCT). Residues asparagine 4335 and asparagine 4376 are each glycosylated (N-linked (GlcNAc...) asparagine). Residues 4384 to 4442 (CPAHSHHTYCLPSCIPSCSNVNDRCESTSLQRPSTCIEGCLCHSGFVFSKDKCVPRTQC) enclose the TIL 21 domain. The region spanning 4443 to 4498 (GCKDSQGTLIPAGKNWITTGCSQRCTCTGGLVQCHDFQCPSGAECQDIEDGNSNCV) is the VWFC 21 domain. One can recognise a TIL 22 domain in the interval 4504 to 4562 (CPAHSHYSKCLPPCQPSCSDPDGHCEGTSPEAPSTCEEGCVCEPDYVLSNDKCVPSSEC). The region spanning 4563-4618 (GCKDAHGVLIPESKTWVSRGCTKNCTCKGGTVQCHDFSCPTGSRCLDNNEGNSNCV) is the VWFC 22 domain. Asparagine 4586 carries an N-linked (GlcNAc...) asparagine glycan. Positions 4624 to 4682 (CPAHSLYTNCLPSCLPSCSDPEGLCGGTSPEVPSTCKEGCICQSGYVLHKNKCMLRIHC) constitute a TIL 23 domain. A VWFC 23 domain is found at 4683-4738 (DCKDFQGSLIKTGQTWISSGCSKICTCKGGFFQCQSYKCPSGTQCEESEDGSSNCV). Positions 4744–4802 (CPANSLYTHCLPTCLPSCSNPDGRCEGTSHKAPSTCREGCVCQPGYLLNKDTCVHKNQC) constitute a TIL 24 domain. The VWFC 24 domain occupies 4803–4858 (GCKDIRGNIIPAGNTWISSDCTQSCACTDGVIQCQNFVCPSGSHCQYNEDGSSDCA). Residues 4863–5038 (ERCTIFGDPY…SWEVKAQHAF (176 aa)) enclose the VWFD 4 domain. Cysteine 4865 and cysteine 5001 are disulfide-bonded. An N-linked (GlcNAc...) asparagine glycan is attached at asparagine 5136. One can recognise a TIL 25 domain in the interval 5150-5203 (CPANTVYQRCMTPCPASCAKFVTPKVCEGPCVEGCASLPGYIYSDTQSLPVTHC). Residues 5204-5258 (GCTADGIYYKLGDSFVTNDCSQHCTCASQGILLCEPYGCRAGESCMVANFTRGCF) form the VWFC 25 domain. Asparagine 5252 is a glycosylation site (N-linked (GlcNAc...) asparagine). The EGF-like domain maps to 5259–5295 (QDSPCLQNPCHNDGRCEEQGATFICHCDFGYGGEFCT). 3 cysteine pairs are disulfide-bonded: cysteine 5263/cysteine 5274, cysteine 5268/cysteine 5283, and cysteine 5285/cysteine 5294. A helical membrane pass occupies residues 5311-5337 (LVAILPGVLVMVLVPVLLPRVYVYMAT). Over 5338 to 5376 (RTTMGRRRMKRKEKKLLRQSRLRLEDADVPEPTFKATEF) the chain is Cytoplasmic.

Probably forms covalent oligomers. As to expression, in testis, primarily in haploid spermatids.

It is found in the cell membrane. In terms of biological role, binds in a species-specific manner to the zona pellucida of the egg. May be involved in gamete recognition and/or signaling. The sequence is that of Zonadhesin (Zan) from Mus musculus (Mouse).